The sequence spans 947 residues: Cell adhesion molecule CEACAM5 (947 aa).

The signal sequence occupies residues 1 to 34 (MEASSVLPCKWCTHLQGLLLTASFLTCCHLPTTA). 7 Ig-like V-type domains span residues 35–132 (QITI…EIVS), 166–259 (SEGG…VQLY), 270–378 (PLQV…LHVN), 392–498 (RLSI…LQLD), 509–615 (QVKI…LHVN), 642–733 (GESV…VQLQ), and 746–851 (DQLI…VQVH). N-linked (GlcNAc...) asparagine glycans are attached at residues Asn-57, Asn-103, Asn-110, Asn-207, Asn-224, Asn-341, Asn-461, Asn-472, Asn-578, Asn-698, Asn-709, Asn-816, and Asn-823. The Ig-like C2-type 1 domain maps to 859–943 (PFVRVTDTTV…SKSSLPVRLA (85 aa)). A disulfide bridge links Cys-878 with Cys-926.

The protein belongs to the immunoglobulin superfamily. CEA family. In terms of assembly, homodimer.

The protein localises to the cell membrane. It is found in the apical cell membrane. Its subcellular location is the cell surface. In terms of biological role, cell surface glycoprotein that plays a role in cell adhesion, intracellular signaling and tumor progression. Mediates homophilic and heterophilic cell adhesion with other carcinoembryonic antigen-related cell adhesion molecules, such as CEACAM6. Plays a role as an oncogene by promoting tumor progression; induces resistance to anoikis of colorectal carcinoma cells. This is Cell adhesion molecule CEACAM5 from Mus musculus (Mouse).